The following is a 718-amino-acid chain: MSEISNRLQILLIDCYDSYTFNLYDLLYKASENACVIVVHWDKMSPDLWEDILQFDAIVVGPGPGHPAEYSSILNRIWQLNIPVMGICLGFQSLALYHGATIERMPNLPWHGRVSSVTTSKTFIFDGISAVKGMRYHSLYANKIPIDSLQILAQSDEDNIVMSIKATKFPHFGILYHPESVGSSKSLKIFKNFLSLADTPNIQCVNSFSKSANGFSHNLNRYDISPAAFILKSGSPSLQIHSVEIPWVEPLALADCIQKSGNPICFLDSAKKPGRYSILGILTGPLARIIHYEKATNTTEIRICKDNSFVRINNDLWSTVADFMNQHKAIKPDTNLPFYGGIMGIIGYECSDLSTKSVSNASFPLDFQQTTVDAELAFVDRSFVFDLEIKKLFVQTLTPLNETCSEWWGELLASTCNTKLDNLSCLHSFDGKQNFGLVQSFPKKEVYCESVKACQEHLLAGDSYEMCLTDTTFVSAPPELSDFEMYMRARSLNPATFAGFVRLNHFTLLCCSPERFLQFRDDRCLFSPIKGTLKREGHMSLEEARKKLLNEKDMGELNMIIDLIRNDLHQLAKKNSVHVPELYSVEEHSNVYSLLSNIYGRIESPITAWDVLSKSFPPGSMTGAPKLRSVRMLEPLEQHGRGIYSGTLGYWDVTGSAEFNVIIRSAFKYKADDYWRIGAGGAVTILSSPEGEYEEMVLKANSILPAFVNLKNKKRSCK.

The Glutamine amidotransferase type-1 domain occupies 9–203 (QILLIDCYDS…LSLADTPNIQ (195 aa)). Catalysis depends on cysteine 88, which acts as the Nucleophile. Catalysis depends on residues histidine 177 and glutamate 179. Residues 266-718 (FLDSAKKPGR…NLKNKKRSCK (453 aa)) form a PABB component region.

The protein in the C-terminal section; belongs to the anthranilate synthase component I family.

Its subcellular location is the cytoplasm. The protein localises to the nucleus. The catalysed reaction is chorismate + L-glutamine = 4-amino-4-deoxychorismate + L-glutamate. The protein operates within cofactor biosynthesis; tetrahydrofolate biosynthesis; 4-aminobenzoate from chorismate: step 1/2. Catalyzes the biosynthesis of 4-amino-4-deoxychorismate (ADC) from chorismate and glutamine. Required for the synthesis of 4-aminobenzoate (PABA), an important component in tetrahydrofolate biosynthesis. This Schizosaccharomyces pombe (strain 972 / ATCC 24843) (Fission yeast) protein is Putative aminodeoxychorismate synthase.